We begin with the raw amino-acid sequence, 345 residues long: Nuclear distribution protein nudE-like 1 (345 aa).

Positions 27 to 190 (KQTFQEARDE…LAVRERQQEV (164 aa)) form a coiled coil. The tract at residues 56–166 (VQAEQRNRDL…LDEKESLLVS (111 aa)) is self-association. Positions 64–189 (DLQADNQRLK…ELAVRERQQE (126 aa)) are interaction with KATNB1. Residues 114–133 (YVRELEQANDDLERAKRATI) are required for interaction with PAFAH1B1. Residues 175-345 (RDLRQELAVR…SAPGMLPLSV (171 aa)) form an interaction with CENPF region. Residues 189–256 (EVTRKSAPSS…SARISALNIV (68 aa)) are interaction with YWHAE. The interaction with NEFL stretch occupies residues 191–345 (TRKSAPSSPT…SAPGMLPLSV (155 aa)). Positions 195–256 (APSSPTLDCE…SARISALNIV (62 aa)) are interaction with KATNA1. Position 215 is a phosphoserine (Ser-215). A disordered region spans residues 217 to 240 (PATPVGKGTENSFPSPKAIPNGFG). Thr-219 is modified (phosphothreonine; by CDK1 and MAPK1). An interaction with DISC1 region spans residues 227–278 (NSFPSPKAIPNGFGTSPLTPSARISALNIVGDLLRKVGALESKLAACRNFAK). Ser-231 bears the Phosphoserine mark. A Phosphoserine; by CDK1 modification is found at Ser-242. Thr-245 carries the post-translational modification Phosphothreonine; by CDK1 and MAPK1. Residues 256–291 (VGDLLRKVGALESKLAACRNFAKDQASRKSYISGNV) form a required for localization to the centrosome and interaction with dynein, dynactin, tubulin gamma, PCM1 and PCNT region. A lipid anchor (S-palmitoyl cysteine; by ZDHHC2, ZDHHC3 and ZDHHC7) is attached at Cys-273. The interval 316–345 (AVNGFDPAPPPPGLGSSRPLSAPGMLPLSV) is disordered. The segment covering 329–339 (LGSSRPLSAPG) has biased composition (low complexity). A Phosphoserine modification is found at Ser-344.

Belongs to the nudE family. In terms of assembly, self-associates. Interacts with DISC1, dynein, dynactin, tubulin gamma, KATNA1, KATNB1, microtubules, PAFAH1B1, PCM1, PCNT, and YWHAE. Interacts directly with NEFL and indirectly with NEFH. Interacts (via C-terminus) with CENPF. Interacts with ZNF365. Interacts with PLEKHM1 (via N- and C-terminus). Interacts with GTP-bound RAB9A; the interaction may lead to RAB9A-dynein motor tethering. Phosphorylated in mitosis. Can be phosphorylated by CDK1, CDK5 and MAPK1. Phosphorylation by CDK5 promotes interaction with KATNA1 and YWHAE. In terms of processing, palmitoylation at Cys-273 reduces affinity for dynein. In terms of tissue distribution, expressed at low levels in heart, hypothalamus, liver, lung, spleen and stomach. Expressed at higher levels in testis and brain. Within the brain, expressed in cerebellum, cerebral stem, cortex and striatum.

It is found in the cytoplasm. The protein resides in the cytoskeleton. Its subcellular location is the microtubule organizing center. It localises to the centrosome. The protein localises to the chromosome. It is found in the centromere. The protein resides in the kinetochore. Its subcellular location is the spindle. Its function is as follows. Required for organization of the cellular microtubule array and microtubule anchoring at the centrosome. May regulate microtubule organization at least in part by targeting the microtubule severing protein KATNA1 to the centrosome. Also positively regulates the activity of the minus-end directed microtubule motor protein dynein. May enhance dynein-mediated microtubule sliding by targeting dynein to the microtubule plus ends. Required for several dynein- and microtubule-dependent processes such as the maintenance of Golgi integrity, the centripetal motion of secretory vesicles and the coupling of the nucleus and centrosome. Also required during brain development for the migration of newly formed neurons from the ventricular/subventricular zone toward the cortical plate. Plays a role, together with DISC1, in the regulation of neurite outgrowth. Required for mitosis in some cell types but appears to be dispensible for mitosis in cortical neuronal progenitors, which instead requires NDE1. Facilitates the polymerization of neurofilaments from the individual subunits NEFH and NEFL. Positively regulates lysosome peripheral distribution and ruffled border formation in osteoclasts. Plays a role, together with DISC1, in the regulation of neurite outgrowth. May act as a RAB9A/B effector that tethers RAB9-associated late endosomes to the dynein motor for their retrograde transport to the trans-Golgi network. This chain is Nuclear distribution protein nudE-like 1 (NDEL1), found in Oryctolagus cuniculus (Rabbit).